An 87-amino-acid polypeptide reads, in one-letter code: Defensin-like protein 218 (87 aa).

Positions 1 to 19 (MKTIVCFLTILILVSSCES) are cleaved as a signal peptide. Cystine bridges form between Cys51–Cys70, Cys54–Cys75, and Cys58–Cys77.

The protein belongs to the DEFL family.

It localises to the secreted. The chain is Defensin-like protein 218 from Arabidopsis thaliana (Mouse-ear cress).